We begin with the raw amino-acid sequence, 294 residues long: 4-hydroxybenzoate octaprenyltransferase (294 aa).

Transmembrane regions (helical) follow at residues 37-57 (LWAM…WIFF), 101-121 (LAVA…LNAL), 142-162 (FFAI…PMAF), 169-189 (VPFV…AYDT), 219-239 (IMIC…LLGL), 241-261 (WPYY…YTLI), and 271-293 (AAFR…AYLL).

It belongs to the UbiA prenyltransferase family. Mg(2+) serves as cofactor.

Its subcellular location is the cell inner membrane. The catalysed reaction is all-trans-octaprenyl diphosphate + 4-hydroxybenzoate = 4-hydroxy-3-(all-trans-octaprenyl)benzoate + diphosphate. Its pathway is cofactor biosynthesis; ubiquinone biosynthesis. In terms of biological role, catalyzes the prenylation of para-hydroxybenzoate (PHB) with an all-trans polyprenyl group. Mediates the second step in the final reaction sequence of ubiquinone-8 (UQ-8) biosynthesis, which is the condensation of the polyisoprenoid side chain with PHB, generating the first membrane-bound Q intermediate 3-octaprenyl-4-hydroxybenzoate. The polypeptide is 4-hydroxybenzoate octaprenyltransferase (Cupriavidus metallidurans (strain ATCC 43123 / DSM 2839 / NBRC 102507 / CH34) (Ralstonia metallidurans)).